Consider the following 185-residue polypeptide: MKGNTMIAQVVEPYAGALMTLAQETNKVEAFAENCRALLSLFQESAEFRSFVMNPLVKAEDKKGVLQGVCGQDVDTYFLNFLFLLVDRRRIVFLEGICQEFVALQRKLNNIVLADVTSAQPLTTDQEAAIADQVKQMTGANAVELNISTDADLIGGVVIKVGSKVFDASLRGQLRRISMDLLGSN.

This sequence belongs to the ATPase delta chain family. In terms of assembly, F-type ATPases have 2 components, F(1) - the catalytic core - and F(0) - the membrane proton channel. F(1) has five subunits: alpha(3), beta(3), gamma(1), delta(1), epsilon(1). CF(0) has four main subunits: a(1), b(1), b'(1) and c(10-14). The alpha and beta chains form an alternating ring which encloses part of the gamma chain. F(1) is attached to F(0) by a central stalk formed by the gamma and epsilon chains, while a peripheral stalk is formed by the delta, b and b' chains.

It is found in the cellular thylakoid membrane. Functionally, f(1)F(0) ATP synthase produces ATP from ADP in the presence of a proton or sodium gradient. F-type ATPases consist of two structural domains, F(1) containing the extramembraneous catalytic core and F(0) containing the membrane proton channel, linked together by a central stalk and a peripheral stalk. During catalysis, ATP synthesis in the catalytic domain of F(1) is coupled via a rotary mechanism of the central stalk subunits to proton translocation. In terms of biological role, this protein is part of the stalk that links CF(0) to CF(1). It either transmits conformational changes from CF(0) to CF(1) or is implicated in proton conduction. The chain is ATP synthase subunit delta from Picosynechococcus sp. (strain ATCC 27264 / PCC 7002 / PR-6) (Agmenellum quadruplicatum).